A 159-amino-acid chain; its full sequence is Transcription repressor OFP6 (159 aa).

Residues 39-60 (PKRPSSTYRHCHSSISSATPSS) form a disordered region. The span at 51 to 60 (SSISSATPSS) shows a compositional bias: low complexity. The OVATE domain occupies 70–129 (VEKDSDDPYLDFRQSMLQMILENQIYSKDELRELLQCFLSLNSHYHHGIIVRAFSEIWED).

In terms of assembly, interacts with KNAT1 and KNAT7. As to expression, expressed in roots, shoots, rosette and cauline leaves, stems, flower buds and siliques.

The protein localises to the nucleus. In terms of biological role, transcriptional repressor that regulates multiple aspects of plant growth and development through the regulation of BEL1-LIKE (BLH) and KNOX TALE (KNAT) homeodomain transcription factors. The polypeptide is Transcription repressor OFP6 (OFP6) (Arabidopsis thaliana (Mouse-ear cress)).